Here is a 496-residue protein sequence, read N- to C-terminus: MIPVVALVGRPNVGKSTLFNRLTRSRDALVADFPGLTRDRKYGQAKVGEHDFIVIDTGGIDGSEEGVETKMAEQSLAAIREADVVLFMVDGRAGLTPSDEAIAAHLRKIEKATMLVVNKVDGIDADAASADFWQLGVDEMYQIAAAHGRGVTALIERALDPFFDNLLSTNSEGEIEDLTNMEDEEAEQQEYSEEDAEESLKRLQDQPIKLAIIGRPNVGKSTLTNRILGEERVVVYDMPGTTRDSIYIPMERDGREYVLIDTAGVRRRGKVHETVEKFSVVKTLKAVEDANVVLLVIDARENISDQDLSLLGFALNAGRSIVLAVNKWDGLDNEVKENVKKELDRRLGFVDFARIHFISALHGTGVGHLFESVQEAYRSATTRVGTSVLTRIMKMATEDHQPPMVRGRRVKLKYAHAGGYNPPIVVIHGNQVRELPDSYKRYLMNYFRKSLDIMGTPIRIQFQNSDNPFENRVNKMTLSQERARKRMMSAVKNRKK.

EngA-type G domains follow at residues 3-166 and 208-381; these read PVVA…FDNL and IKLA…RSAT. Residues 9 to 16, 56 to 60, 118 to 121, 214 to 221, 261 to 265, and 326 to 329 contribute to the GTP site; these read GRPNVGKS, DTGGI, NKVD, DTAGV, and NKWD. Residues 382 to 466 enclose the KH-like domain; that stretch reads TRVGTSVLTR…PIRIQFQNSD (85 aa).

The protein belongs to the TRAFAC class TrmE-Era-EngA-EngB-Septin-like GTPase superfamily. EngA (Der) GTPase family. Associates with the 50S ribosomal subunit.

Its function is as follows. GTPase that plays an essential role in the late steps of ribosome biogenesis. The sequence is that of GTPase Der from Vibrio vulnificus (strain YJ016).